We begin with the raw amino-acid sequence, 499 residues long: UDP-N-acetylmuramoyl-L-alanyl-D-glutamate--2,6-diaminopimelate ligase (499 aa).

Residue Ser32 participates in UDP-N-acetyl-alpha-D-muramoyl-L-alanyl-D-glutamate binding. An ATP-binding site is contributed by 117 to 123 (GTNGKTT). Residues 159-160 (TT), Ser186, Gln192, and Arg194 each bind UDP-N-acetyl-alpha-D-muramoyl-L-alanyl-D-glutamate. Lys226 carries the post-translational modification N6-carboxylysine. Meso-2,6-diaminopimelate contacts are provided by residues Arg394, 418-421 (DNPR), Gly469, and Glu473. The Meso-diaminopimelate recognition motif motif lies at 418-421 (DNPR).

It belongs to the MurCDEF family. MurE subfamily. It depends on Mg(2+) as a cofactor. Post-translationally, carboxylation is probably crucial for Mg(2+) binding and, consequently, for the gamma-phosphate positioning of ATP.

The protein localises to the cytoplasm. It catalyses the reaction UDP-N-acetyl-alpha-D-muramoyl-L-alanyl-D-glutamate + meso-2,6-diaminopimelate + ATP = UDP-N-acetyl-alpha-D-muramoyl-L-alanyl-gamma-D-glutamyl-meso-2,6-diaminopimelate + ADP + phosphate + H(+). The protein operates within cell wall biogenesis; peptidoglycan biosynthesis. Catalyzes the addition of meso-diaminopimelic acid to the nucleotide precursor UDP-N-acetylmuramoyl-L-alanyl-D-glutamate (UMAG) in the biosynthesis of bacterial cell-wall peptidoglycan. The sequence is that of UDP-N-acetylmuramoyl-L-alanyl-D-glutamate--2,6-diaminopimelate ligase from Synechococcus sp. (strain WH7803).